A 101-amino-acid chain; its full sequence is Large ribosomal subunit protein P1 (101 aa).

The span at 61 to 72 (AAPAAAAAPAAA) shows a compositional bias: low complexity. A disordered region spans residues 61 to 101 (AAPAAAAAPAAAEEAEEEAEEEEEEEEAEEEAAAGLGALFG). Positions 73–92 (EEAEEEAEEEEEEEEAEEEA) are enriched in acidic residues.

It belongs to the eukaryotic ribosomal protein P1/P2 family. As to quaternary structure, part of the 50S ribosomal subunit. Homodimer, it forms part of the ribosomal stalk which helps the ribosome interact with GTP-bound translation factors. Forms a heptameric uL10/P0(P1)2(P1)2(P1)2 complex, where uL10/P0 forms an elongated spine to which the P1 dimers bind in a sequential fashion.

Forms part of the ribosomal stalk, playing a central role in the interaction of the ribosome with GTP-bound translation factors. The sequence is that of Large ribosomal subunit protein P1 from Methanothermobacter thermautotrophicus (strain ATCC 29096 / DSM 1053 / JCM 10044 / NBRC 100330 / Delta H) (Methanobacterium thermoautotrophicum).